Here is a 479-residue protein sequence, read N- to C-terminus: Adenylate kinase 8 (479 aa).

Adenylate kinase regions lie at residues 58–258 (PRIV…TYVQ) and 269–471 (PRVL…SGII). 67-72 (ASGKTT) is an ATP binding site. Residues 87–113 (TLENLILNEFSYTATEARRLYLQRKTV) are NMP 1. AMP contacts are provided by residues 140–143 (GIPE), Gln147, and Arg203. The LID 1 stretch occupies residues 177–206 (GKRIDPQTGEIYHTTFDWPPESEIQNRLMV). 278–283 (GSGKSL) is a binding site for ATP. Residues 298–327 (CCGQLLKEAVADRTTFGELIQPFFEKEMAV) are NMP 2. AMP is bound by residues 325-327 (MAV), 354-357 (GVPR), and Gln361. The tract at residues 391-424 (LRRIDPVTGERYHLMYKPPPTMEIQARLLQNPKD) is LID 2. Arg392 provides a ligand contact to ATP.

The protein belongs to the adenylate kinase family. As to quaternary structure, interacts with CFAP45 and CFAP52; CFAP45 and AK8 dimerization may create a cavity at the interface of the dimer that can accommodate AMP. In terms of tissue distribution, expressed in respiratory cells (at protein level).

The protein localises to the cytoplasm. The protein resides in the cytosol. It is found in the cytoskeleton. It localises to the cilium axoneme. The catalysed reaction is AMP + ATP = 2 ADP. The enzyme catalyses a 2'-deoxyribonucleoside 5'-diphosphate + ATP = a 2'-deoxyribonucleoside 5'-triphosphate + ADP. It carries out the reaction a ribonucleoside 5'-diphosphate + ATP = a ribonucleoside 5'-triphosphate + ADP. Functionally, nucleoside monophosphate (NMP) kinase that catalyzes the reversible transfer of the terminal phosphate group between nucleoside triphosphates and monophosphates. Has highest activity toward AMP, and weaker activity toward dAMP, CMP and dCMP. Also displays broad nucleoside diphosphate kinase activity. The chain is Adenylate kinase 8 (AK8) from Homo sapiens (Human).